The primary structure comprises 97 residues: uncharacterized protein (97 aa).

A run of 3 helical transmembrane segments spans residues 5 to 25 (INYL…FVGI), 49 to 71 (IAGY…SFQG), and 75 to 92 (LIPP…IYVN).

It is found in the cell membrane. This is an uncharacterized protein from Bacillus subtilis (strain 168).